A 440-amino-acid chain; its full sequence is MKLKYKVILIINFVTVLFSIFTFIGYLNNLIGFRVVTISLCITIAMTVYLLYKKRKGFLLVYLIYLFLTNFGVFVTNIFLANPLVEYHGDLSWYYINTSNLFSIATFAILTFTILSNFISVFSKINPSRKFDIKSKGNNLFYYTGILFIIGFTIQFLFYIITGRLAINTYGDYVSSIQELPMYTYGIFFFSIGIAFAFSNVKKTHIKYLVIILTPQVLFFLITGNRGEVFYPILSALGVLIVRNYKIKWWMIITIVFTLFFVIPFIKVFRNMDSSSIEKVDINWFSSLVEIGYTLRPLGYVTRWIDGGESIVYGKSYLAPIQNIFSYIIPGLQPVNYEMVGYGFRYRLPGMGFNVIAEAYYNGAIVGVLIVMVLLVLLLWKFTNFKSFEMLSMGTAIVSVLINNIRNAFSFVPAYILIIIVIVIILLFIDSYLKKETKAD.

The next 12 membrane-spanning stretches (helical) occupy residues 7–27, 31–51, 60–80, 102–122, 141–161, 179–199, 204–224, 249–269, 324–344, 360–380, 382–402, and 409–429; these read VILI…IGYL, IGFR…VYLL, LVYL…NIFL, FSIA…ISVF, FYYT…FYII, ELPM…FAFS, THIK…LITG, WWMI…IKVF, IFSY…GYGF, YYNG…LLLW, FTNF…SVLI, and FSFV…LLFI.

Its subcellular location is the cell membrane. Its pathway is capsule biogenesis; capsule polysaccharide biosynthesis. Its function is as follows. Required for the biosynthesis of type 1 capsular polysaccharide. This is Protein CapE (capE) from Staphylococcus aureus.